We begin with the raw amino-acid sequence, 121 residues long: UPF0344 protein BCG9842_B4136 (121 aa).

4 consecutive transmembrane segments (helical) span residues 6-26 (ITAW…YSAG), 38-58 (LMYI…VKTA), 65-85 (WYGL…MVLV), and 92-112 (PTGA…YLGL).

Belongs to the UPF0344 family.

It localises to the cell membrane. This is UPF0344 protein BCG9842_B4136 from Bacillus cereus (strain G9842).